The chain runs to 599 residues: Prostaglandin G/H synthase 1 (599 aa).

A signal peptide spans 1–23; that stretch reads MSRSLLLWFLLFLLLLPPLPVLL. Positions 31 to 69 constitute an EGF-like domain; it reads PVNPCCYYPCQHQGICVRFGLDRYQCDCTRTGYSGPNCT. 4 disulfides stabilise this stretch: Cys-35–Cys-46, Cys-36–Cys-158, Cys-40–Cys-56, and Cys-58–Cys-68. N-linked (GlcNAc...) asparagine glycans are attached at residues Asn-67, Asn-103, and Asn-143. Residue His-206 is the Proton acceptor of the active site. Catalysis depends on Tyr-384, which acts as the For cyclooxygenase activity. A heme b-binding site is contributed by His-387. Cys-568 and Cys-574 are oxidised to a cystine.

The protein belongs to the prostaglandin G/H synthase family. As to quaternary structure, homodimer. The cofactor is heme b.

It is found in the microsome membrane. It localises to the endoplasmic reticulum membrane. It catalyses the reaction (5Z,8Z,11Z,14Z)-eicosatetraenoate + AH2 + 2 O2 = prostaglandin H2 + A + H2O. The enzyme catalyses (5Z,8Z,11Z,14Z)-eicosatetraenoate + 2 O2 = prostaglandin G2. It carries out the reaction prostaglandin G2 + AH2 = prostaglandin H2 + A + H2O. The catalysed reaction is (9Z,12Z)-octadecadienoate + AH2 + O2 = (9R)-hydroxy-(10E,12Z)-octadecadienoate + A + H2O. It catalyses the reaction (9Z,12Z)-octadecadienoate + AH2 + O2 = (9S)-hydroxy-(10E,12Z)-octadecadienoate + A + H2O. The enzyme catalyses (9Z,12Z)-octadecadienoate + AH2 + O2 = (13S)-hydroxy-(9Z,11E)-octadecadienoate + A + H2O. It carries out the reaction (9Z,12Z)-octadecadienoate + AH2 + O2 = (13R)-hydroxy-(9Z,11E)-octadecadienoate + A + H2O. It participates in lipid metabolism; prostaglandin biosynthesis. Its activity is regulated as follows. The cyclooxygenase activity is inhibited by nonsteroidal anti-inflammatory drugs (NSAIDs) including ibuprofen, flurbiprofen, ketoprofen, naproxen, flurbiprofen, anirolac, fenclofenac and diclofenac. Its function is as follows. Dual cyclooxygenase and peroxidase that plays an important role in the biosynthesis pathway of prostanoids, a class of C20 oxylipins mainly derived from arachidonate ((5Z,8Z,11Z,14Z)-eicosatetraenoate, AA, C20:4(n-6)), with a particular role in the inflammatory response. The cyclooxygenase activity oxygenates AA to the hydroperoxy endoperoxide prostaglandin G2 (PGG2), and the peroxidase activity reduces PGG2 to the hydroxy endoperoxide prostaglandin H2 (PGH2), the precursor of all 2-series prostaglandins and thromboxanes. This complex transformation is initiated by abstraction of hydrogen at carbon 13 (with S-stereochemistry), followed by insertion of molecular O2 to form the endoperoxide bridge between carbon 9 and 11 that defines prostaglandins. The insertion of a second molecule of O2 (bis-oxygenase activity) yields a hydroperoxy group in PGG2 that is then reduced to PGH2 by two electrons. Involved in the constitutive production of prostanoids in particular in the stomach and platelets. In gastric epithelial cells, it is a key step in the generation of prostaglandins, such as prostaglandin E2 (PGE2), which plays an important role in cytoprotection. In platelets, it is involved in the generation of thromboxane A2 (TXA2), which promotes platelet activation and aggregation, vasoconstriction and proliferation of vascular smooth muscle cells. Can also use linoleate (LA, (9Z,12Z)-octadecadienoate, C18:2(n-6)) as substrate and produce hydroxyoctadecadienoates (HODEs) in a regio- and stereospecific manner, being (9R)-HODE ((9R)-hydroxy-(10E,12Z)-octadecadienoate) and (13S)-HODE ((13S)-hydroxy-(9Z,11E)-octadecadienoate) its major products. This Homo sapiens (Human) protein is Prostaglandin G/H synthase 1.